We begin with the raw amino-acid sequence, 338 residues long: Transcription factor MYB76 (338 aa).

HTH myb-type domains follow at residues Gly-9 to Ile-65 and Lys-66 to Leu-116. 2 DNA-binding regions (H-T-H motif) span residues Trp-37–Leu-61 and Trp-89–Leu-112. Disordered regions lie at residues Pro-123–Leu-171 and Ser-176–Arg-195. Residues Met-140–Ser-154 are compositionally biased toward basic and acidic residues. Positions Ser-155–Leu-171 are enriched in low complexity.

As to quaternary structure, can form complexes with MYC2, MYC3 or MYC4. In terms of tissue distribution, expressed in both vegetative and generative organs. Mostly present in inflorescences, flowers and seedlings, in the transition zone between roots and the foliar part, and stems, and, to a lower extent, in leaves (in midvein and trichomes).

It is found in the nucleus. Plays a role in determining the spatial distribution of aliphatic glucosinolates (AGLSs) within the leaf, mostly short chained. Together with MYB28/HAG1 and MYB29/HAG3, promotes aliphatic glucosinolate biosynthesis and represses indolic glucosinolate biosynthesis, but could not activate AGSL biosynthesis on its own. The protein is Transcription factor MYB76 (MYB76) of Arabidopsis thaliana (Mouse-ear cress).